Consider the following 82-residue polypeptide: MKLTCMMIVAVLFLTAWTLVMADDSNNGLANLFSKSRDEMEDPEASKLEKKDCQEKWDFCPAPFFGSRYCCFGLFCTLFFCA.

The first 22 residues, 1–22 (MKLTCMMIVAVLFLTAWTLVMA), serve as a signal peptide directing secretion. The propeptide occupies 23 to 49 (DDSNNGLANLFSKSRDEMEDPEASKLE). 3 disulfides stabilise this stretch: C53-C71, C60-C76, and C70-C81.

It belongs to the conotoxin O1 superfamily. In terms of tissue distribution, expressed by the venom duct.

It localises to the secreted. Omega-conotoxins act at presynaptic membranes, they bind and block voltage-gated calcium channels (Cav). The sequence is that of Omega-conotoxin-like TxMKLT1-031 from Conus textile (Cloth-of-gold cone).